A 210-amino-acid polypeptide reads, in one-letter code: Large ribosomal subunit protein uL4 (210 aa).

The segment at 46–89 is disordered; it reads QGTASTLTRSEVRGGGRKPYKQKGTGRARQGSIRTPLRPGGGII. The span at 60-71 shows a compositional bias: basic residues; that stretch reads GGRKPYKQKGTG.

It belongs to the universal ribosomal protein uL4 family. Part of the 50S ribosomal subunit.

In terms of biological role, one of the primary rRNA binding proteins, this protein initially binds near the 5'-end of the 23S rRNA. It is important during the early stages of 50S assembly. It makes multiple contacts with different domains of the 23S rRNA in the assembled 50S subunit and ribosome. Functionally, forms part of the polypeptide exit tunnel. This is Large ribosomal subunit protein uL4 from Prochlorococcus marinus (strain MIT 9312).